The primary structure comprises 378 residues: Putative F-box protein At4g17565 (378 aa).

An F-box domain is found at 16–63 (PKWSELCPDLLRSIFEQLSFTNLNRAKLVCRSWNSASRGCVPKRNQIP).

This chain is Putative F-box protein At4g17565, found in Arabidopsis thaliana (Mouse-ear cress).